The sequence spans 120 residues: Eukaryotic translation initiation factor 4E-binding protein 2 (120 aa).

2 positions are modified to phosphothreonine; by MTOR: threonine 37 and threonine 46. A YXXXXLphi motif motif is present at residues 54 to 60 (YDRKFLL). Serine 65 carries the post-translational modification Phosphoserine; by MTOR. Threonine 70 bears the Phosphothreonine; by MTOR mark. Serine 83 carries the post-translational modification Phosphoserine. Deamidated asparagine occurs at positions 99 and 102. The TOS motif motif lies at 116-120 (FEMDI).

Belongs to the eIF4E-binding protein family. As to quaternary structure, hypophosphorylated EIF4EBP2 interacts with EIF4E; phosphorylation of EIF4EBP2 by mTORC1 causes dissociation of the complex allowing EIF4G1/EIF4G3 to bind and consequent initiation of translation. Interacts (via TOS motif) with RPTOR; promoting phosphorylation by mTORC1. Interacts with PCMT1; required to prevent isoaspartate accumulation and convert isoaspartate to Asp. Phosphorylation at Thr-37, Thr-46, Ser-65, Thr-70 and Ser-83 is mediated by MTOR and corresponds to the hyperphosphorylated form: it abolishes binding to EIF4E by inducing folding of intrinsically disordered regions. First phosphorylated at Thr-37 and Thr-46 by MTOR, inducing folding of region encompassing residues from Pro-18 to Arg-62 of into a four-stranded beta-domain that sequesters the helical YXXXXLPhi motif into a partly buried beta-strand, blocking accessibility to EIF4E. Protein phosphorylated at Thr-37 and Thr-46 is however unstable and subsequent phosphorylation at Ser-65, Thr-70 and Ser-83 is required to stabilize the fold, decreasing affinity for EIF4E by a factor of 4000. Phosphorylated in response to insulin, EGF and PDGF. In terms of processing, deamidated at Asn-99 and Asn-102 to aspartate (Asp) in brain. Deamidation promotes interaction with RPTOR, subsequent phosphorylation by mTORC1 and increased translation, leading to impair kinetics of excitatory synaptic transmission. Deamidation takes place during postnatal development, when the PI3K-Akt-mTOR signaling is reduced, suggesting it acts as a compensatory mechanism to promote translation despite attenuated PI3K-Akt-mTOR signaling in neuron development. Deamidation converts Asn residues into a mixture of Asp and isoaspartate; interactions with PCMT1 is required to prevent isoaspartate accumulation and convert isoaspartate to Asp. In terms of tissue distribution, enriched in brain.

It is found in the cytoplasm. It localises to the nucleus. Its function is as follows. Repressor of translation initiation involved in synaptic plasticity, learning and memory formation. Regulates EIF4E activity by preventing its assembly into the eIF4F complex: hypophosphorylated form of EIF4EBP2 competes with EIF4G1/EIF4G3 and strongly binds to EIF4E, leading to repress translation. In contrast, hyperphosphorylated form dissociates from EIF4E, allowing interaction between EIF4G1/EIF4G3 and EIF4E, leading to initiation of translation. EIF4EBP2 is enriched in brain and acts as a regulator of synapse activity and neuronal stem cell renewal via its ability to repress translation initiation. Mediates the regulation of protein translation by hormones, growth factors and other stimuli that signal through the MAP kinase and mTORC1 pathways. In Mus musculus (Mouse), this protein is Eukaryotic translation initiation factor 4E-binding protein 2.